We begin with the raw amino-acid sequence, 382 residues long: Mannitol-1-phosphate 5-dehydrogenase (382 aa).

3–14 (ALHFGAGNIGRG) provides a ligand contact to NAD(+). Position 269 is an N6-acetyllysine (Lys269).

Belongs to the mannitol dehydrogenase family.

It catalyses the reaction D-mannitol 1-phosphate + NAD(+) = beta-D-fructose 6-phosphate + NADH + H(+). This chain is Mannitol-1-phosphate 5-dehydrogenase, found in Escherichia coli (strain ATCC 8739 / DSM 1576 / NBRC 3972 / NCIMB 8545 / WDCM 00012 / Crooks).